The following is a 135-amino-acid chain: uncharacterized protein (135 aa).

3 helical membrane passes run 12 to 32 (IPILLLVLYIALGVFIQYNGI), 68 to 88 (SMIGGMPGYLPLYAYLCAKFC), and 98 to 118 (GILYFSVVLFIMTSVIWFYLF).

Its subcellular location is the cell membrane. This is an uncharacterized protein from Methanocaldococcus jannaschii (strain ATCC 43067 / DSM 2661 / JAL-1 / JCM 10045 / NBRC 100440) (Methanococcus jannaschii).